Reading from the N-terminus, the 431-residue chain is Teosinte glume architecture 1 (431 aa).

Disordered stretches follow at residues 18–55 and 68–102; these read QDHA…GAPA and ECEP…QQCP. The span at 21-41 shows a compositional bias: low complexity; it reads AAAAPSSGGHAANAAAAGTGT. The SBP-type zinc finger occupies 101–178; it reads CPSCAVDGCR…DGHNRRRRKP (78 aa). The Zn(2+) site is built by Cys-104, Cys-109, Cys-126, His-129, Cys-145, Cys-148, His-152, and Cys-164. Over residues 408–419 the composition is skewed to gly residues; sequence GGGSGGGEGSSD. The segment at 408-431 is disordered; it reads GGGSGGGEGSSDGGTSSSMPFSWQ.

As to quaternary structure, monomer and homodimer. As to expression, strongly expressed in immature ears and weakly in husks. Found in the inflorescence meristem of the developing ear, in the spikelet pair primordia, the glume primordia, the cupule forming region and other floral organs. Not detected in other tissues.

Functionally, SBP transcriptional regulator probably involved in the domestication of maize. Acts as a transcriptional repressor binding to a 5'-GTAC-3' motif. May repress the growth of lateral branches in length and numbers. This is Teosinte glume architecture 1 from Zea mays (Maize).